We begin with the raw amino-acid sequence, 566 residues long: Type 3 secretion system secretin (566 aa).

A signal peptide spans 1–22 (MKKFNIKSLTLLIVLLPLIVNA).

This sequence belongs to the bacterial secretin family. T3SS SctC subfamily. As to quaternary structure, the core secretion machinery of the T3SS is composed of approximately 20 different proteins, including cytoplasmic components, a base, an export apparatus and a needle. This subunit is part of the base, which anchors the injectisome in the bacterial cell envelope. Forms a stable homooligomeric complex. Interacts with the pilotin MxiM/SctG and the inner membrane ring outer protein MxiJ/SctJ.

The protein resides in the cell outer membrane. In terms of biological role, component of the type III secretion system (T3SS), also called injectisome, which is used to inject bacterial effector proteins into eukaryotic host cells. Forms a ring-shaped multimeric structure with an apparent central pore in the outer membrane. Necessary for the secretion of Ipa invasins. The polypeptide is Type 3 secretion system secretin (Shigella flexneri).